A 259-amino-acid chain; its full sequence is Bisphosphoglycerate mutase (259 aa).

An N-acetylserine modification is found at S2. Substrate contacts are provided by residues 10-17, 23-24, R62, 89-92, R100, and 116-117; these read RHGEGQWN, CS, ERHY, and RR. Catalysis depends on H11, which acts as the Tele-phosphohistidine intermediate. E89 (proton donor/acceptor) is an active-site residue. The residue at position 122 (T122) is a Phosphothreonine. 189 to 190 is a binding site for substrate; it reads GN.

This sequence belongs to the phosphoglycerate mutase family. BPG-dependent PGAM subfamily. As to quaternary structure, homodimer. As to expression, expressed in red blood cells. Expressed in placenta (labyrinthine trophoblasts).

The enzyme catalyses (2R)-3-phospho-glyceroyl phosphate = (2R)-2,3-bisphosphoglycerate + H(+). The catalysed reaction is (2R)-2-phosphoglycerate = (2R)-3-phosphoglycerate. Its activity is regulated as follows. At alkaline pH BPGM favors the synthase reaction; however, at lower pH the phosphatase reaction is dominant. Inhibited by citrate. Plays a major role in regulating hemoglobin oxygen affinity by controlling the levels of its allosteric effector 2,3-bisphosphoglycerate (2,3-BPG). Also exhibits mutase (EC 5.4.2.11) activity. This chain is Bisphosphoglycerate mutase (Bpgm), found in Mus musculus (Mouse).